Reading from the N-terminus, the 416-residue chain is Casein kinase I isoform epsilon (416 aa).

One can recognise a Protein kinase domain in the interval 9-277 (YRLGRKIGSG…YLRQLFRNLF (269 aa)). ATP contacts are provided by residues 15–23 (IGSGSFGDI) and lysine 38. Aspartate 128 functions as the Proton acceptor in the catalytic mechanism. A compositionally biased stretch (basic and acidic residues) spans 301-318 (PEDVDRERREHEREERMG). The segment at 301–416 (PEDVDRERRE…TSVPFDHLGK (116 aa)) is disordered. 2 positions are modified to phosphoserine: serine 343 and serine 354. Over residues 351–365 (TPASRIQQTGNTSPR) the composition is skewed to polar residues. Threonine 362 carries the post-translational modification Phosphothreonine. Residue serine 363 is modified to Phosphoserine. An Omega-N-methylarginine modification is found at arginine 382. A phosphoserine mark is found at serine 389, serine 405, and serine 408.

The protein belongs to the protein kinase superfamily. CK1 Ser/Thr protein kinase family. Casein kinase I subfamily. As to quaternary structure, monomer. Component of the circadian core oscillator, which includes the CRY proteins, CLOCK, or NPAS2, ARTNL/BMAL1 or ARTNL2/BMAL2, CSNK1D and/or CSNK1E, TIMELESS and the PER proteins. Interacts with ANKRD6. Interacts with PER1. Interacts with DBNDD2, LRP5, LRP6 and SOCS3. Interacts with SNAI1 (via zinc fingers). Interacts with DDX3X; this interaction greatly enhances CSNK1E affinity for ATP and DVL2 phosphorylation, but inhibits DDX3X ATPase/helicase activity. In the presence of RNA, the interaction is decreased. Interacts with FAM83A, FAM83B, FAM83E and FAM83H (via DUF1669). Post-translationally, autophosphorylated. Partially dephosphorylated by PPP5C. May be dephosphorylated by PP1. Expressed in all tissues examined, including brain, heart, lung, liver, pancreas, kidney, placenta and skeletal muscle. Expressed in monocytes and lymphocytes but not in granulocytes.

It is found in the cytoplasm. The protein localises to the nucleus. It carries out the reaction L-seryl-[protein] + ATP = O-phospho-L-seryl-[protein] + ADP + H(+). The enzyme catalyses L-threonyl-[protein] + ATP = O-phospho-L-threonyl-[protein] + ADP + H(+). With respect to regulation, phosphorylation leads to a decrease in the catalytic activity. Its function is as follows. Casein kinases are operationally defined by their preferential utilization of acidic proteins such as caseins as substrates. Participates in Wnt signaling. Phosphorylates DVL1. Phosphorylates DVL2. Phosphorylates NEDD9/HEF1. Central component of the circadian clock. In balance with PP1, determines the circadian period length, through the regulation of the speed and rhythmicity of PER1 and PER2 phosphorylation. Controls PER1 and PER2 nuclear transport and degradation. Inhibits cytokine-induced granuloytic differentiation. The protein is Casein kinase I isoform epsilon (Csnk1e) of Mus musculus (Mouse).